The chain runs to 146 residues: Hemoglobin subunit beta (146 aa).

In terms of domain architecture, Globin spans 2 to 146 (QWSAEEKQLI…VAHALARKYH (145 aa)). Heme b contacts are provided by histidine 63 and histidine 92.

This sequence belongs to the globin family. In terms of assembly, heterotetramer of two alpha chains and two beta chains. As to expression, red blood cells.

Its function is as follows. Involved in oxygen transport from the lung to the various peripheral tissues. This chain is Hemoglobin subunit beta (HBB), found in Struthio camelus (Common ostrich).